The chain runs to 271 residues: Ribosomal RNA small subunit methyltransferase A (271 aa).

Asn28, Leu30, Gly54, Glu75, Asp99, and Asn117 together coordinate S-adenosyl-L-methionine.

This sequence belongs to the class I-like SAM-binding methyltransferase superfamily. rRNA adenine N(6)-methyltransferase family. RsmA subfamily.

It is found in the cytoplasm. It catalyses the reaction adenosine(1518)/adenosine(1519) in 16S rRNA + 4 S-adenosyl-L-methionine = N(6)-dimethyladenosine(1518)/N(6)-dimethyladenosine(1519) in 16S rRNA + 4 S-adenosyl-L-homocysteine + 4 H(+). Specifically dimethylates two adjacent adenosines (A1518 and A1519) in the loop of a conserved hairpin near the 3'-end of 16S rRNA in the 30S particle. May play a critical role in biogenesis of 30S subunits. The polypeptide is Ribosomal RNA small subunit methyltransferase A (Thermus thermophilus (strain ATCC BAA-163 / DSM 7039 / HB27)).